The chain runs to 48 residues: Disintegrin accutin (48 aa).

A Pyrrolidone carboxylic acid modification is found at Gln1. Positions 1–48 (QGAQCTAGPCCWPCKFLKEGTICRRARGDDLDDYCNGISADCPRNPYY) constitute a Disintegrin domain. 3 disulfide bridges follow: Cys5–Cys11, Cys10–Cys35, and Cys23–Cys42. A Cell attachment site motif is present at residues 27–29 (RGD).

The protein belongs to the venom metalloproteinase (M12B) family. P-II subfamily. P-IIa sub-subfamily. Monomer (disintegrin). As to expression, expressed by the venom gland.

The protein resides in the secreted. Inhibit human platelet aggregation induced by ADP, collagen, thrombin or the thromboxane analog U46619 in platelet suspension with IC(50) values of 66-267 nM. Acts by inhibiting fibrinogen interaction with platelet receptors GPIIb/GPIIIa (ITGA2B/ITGB3). It also inhibits angiogenesis in vivo and in vitro by blocking integrin alpha-V/beta-3 (ITGAV/ITGB3) of endothelial cells and by inducing apoptosis. In Deinagkistrodon acutus (Hundred-pace snake), this protein is Disintegrin accutin.